The sequence spans 517 residues: Nuclear transcription factor Y subunit alpha (517 aa).

Positions 1–11 (MNQINYLTSER) are enriched in polar residues. Disordered regions lie at residues 1–95 (MNQI…MDIH), 121–183 (RIDY…NFNY), 252–281 (ESEN…RGCG), and 304–517 (AAAN…NNRS). 2 stretches are compositionally biased toward low complexity: residues 26-81 (NNSS…SSSS) and 126-183 (NNNN…NFNY). Residues 232 to 255 (YVNAKQYNRILKRRAARAKLESEN) carry the Subunit association domain (SAD) motif. Positions 262 to 287 (KAYQHESRHQHAIRRQRGCGGRFLTK) form a DNA-binding region, NFYA/HAP2-type. The segment covering 304–345 (AAANPNASSTSTTTSNITNNNNNNNNNNNTNNNNNNNNTNVN) has biased composition (low complexity). Acidic residues predominate over residues 359–371 (SDDDIENDVENDS). Composition is skewed to low complexity over residues 377–388 (KNNSNSPNQSSS) and 408–423 (NNNI…NNNN). Residues 438 to 447 (PLLNNGHIQA) are compositionally biased toward polar residues. Residues 448–517 (QQNQSPSSSP…PLSNFSNNRS (70 aa)) are compositionally biased toward low complexity.

Belongs to the NFYA/HAP2 subunit family. As to quaternary structure, heterotrimeric transcription factor composed of three components, nfyA, nfyB and nfyC. nfyB and nfyC must interact and dimerize for nfyA association and DNA binding.

It localises to the nucleus. Its function is as follows. Component of the NF-Y/HAP transcription factor complex. The NF-Y complex stimulates the transcription of various genes by recognizing and binding to a CCAAT motif in promoters. The polypeptide is Nuclear transcription factor Y subunit alpha (nfyA) (Dictyostelium discoideum (Social amoeba)).